A 361-amino-acid polypeptide reads, in one-letter code: Chorismate synthase (361 aa).

2 residues coordinate NADP(+): Arg48 and Arg54. Residues 125–127 (RSS), 238–239 (NA), Gly278, 293–297 (KPTSS), and Arg319 each bind FMN.

It belongs to the chorismate synthase family. In terms of assembly, homotetramer. FMNH2 serves as cofactor.

It carries out the reaction 5-O-(1-carboxyvinyl)-3-phosphoshikimate = chorismate + phosphate. Its pathway is metabolic intermediate biosynthesis; chorismate biosynthesis; chorismate from D-erythrose 4-phosphate and phosphoenolpyruvate: step 7/7. Functionally, catalyzes the anti-1,4-elimination of the C-3 phosphate and the C-6 proR hydrogen from 5-enolpyruvylshikimate-3-phosphate (EPSP) to yield chorismate, which is the branch point compound that serves as the starting substrate for the three terminal pathways of aromatic amino acid biosynthesis. This reaction introduces a second double bond into the aromatic ring system. This chain is Chorismate synthase, found in Salmonella dublin (strain CT_02021853).